The sequence spans 595 residues: Inactive metallocarboxypeptidase ecm14 (595 aa).

The signal sequence occupies residues 1–22 (MYRPDHVFVILCAVFFTGQVTA). Positions 23 to 178 (VPAGTGITHP…MIYESQYPSR (156 aa)) are excised as a propeptide. A Peptidase M14 domain is found at 206–527 (NYQPFPVILQ…NSVLVLGHFL (322 aa)). Zn(2+) is bound by residues His-270 and Glu-273. Residues 270 to 273 (HARE), Arg-328, and 345 to 346 (DR) each bind substrate. An intrachain disulfide couples Cys-339 to Cys-362. Asn-386 carries N-linked (GlcNAc...) asparagine glycosylation. His-402 is a Zn(2+) binding site. Residue 403–404 (SY) coordinates substrate.

Belongs to the peptidase M14 family. Requires Zn(2+) as cofactor.

It localises to the vacuole. The protein resides in the secreted. Inactive carboxypeptidase that may play a role in cell wall organization and biogenesis. The sequence is that of Inactive metallocarboxypeptidase ecm14 (ecm14) from Talaromyces marneffei (strain ATCC 18224 / CBS 334.59 / QM 7333) (Penicillium marneffei).